Consider the following 91-residue polypeptide: Large ribosomal subunit protein bL28 (91 aa).

A disordered region spans residues 1–23 (MSRVCELTGKGPMSGNNVSHANN).

This sequence belongs to the bacterial ribosomal protein bL28 family.

This is Large ribosomal subunit protein bL28 from Paracoccus denitrificans (strain Pd 1222).